A 556-amino-acid chain; its full sequence is DNA ligase B (556 aa).

Lys-126 acts as the N6-AMP-lysine intermediate in catalysis.

Belongs to the NAD-dependent DNA ligase family. LigB subfamily.

It catalyses the reaction NAD(+) + (deoxyribonucleotide)n-3'-hydroxyl + 5'-phospho-(deoxyribonucleotide)m = (deoxyribonucleotide)n+m + AMP + beta-nicotinamide D-nucleotide.. Functionally, catalyzes the formation of phosphodiester linkages between 5'-phosphoryl and 3'-hydroxyl groups in double-stranded DNA using NAD as a coenzyme and as the energy source for the reaction. This Stutzerimonas stutzeri (strain A1501) (Pseudomonas stutzeri) protein is DNA ligase B.